The following is a 321-amino-acid chain: tRNA dimethylallyltransferase (321 aa).

24–31 (GPTASGKS) is an ATP binding site. 26 to 31 (TASGKS) contributes to the substrate binding site. 2 interaction with substrate tRNA regions span residues 49–52 (DSMQ) and 172–176 (QRIVR).

It belongs to the IPP transferase family. As to quaternary structure, monomer. The cofactor is Mg(2+).

The catalysed reaction is adenosine(37) in tRNA + dimethylallyl diphosphate = N(6)-dimethylallyladenosine(37) in tRNA + diphosphate. Its function is as follows. Catalyzes the transfer of a dimethylallyl group onto the adenine at position 37 in tRNAs that read codons beginning with uridine, leading to the formation of N6-(dimethylallyl)adenosine (i(6)A). The chain is tRNA dimethylallyltransferase from Mesorhizobium japonicum (strain LMG 29417 / CECT 9101 / MAFF 303099) (Mesorhizobium loti (strain MAFF 303099)).